A 348-amino-acid polypeptide reads, in one-letter code: Protein RecA (348 aa).

Position 67 to 74 (67 to 74) interacts with ATP; the sequence is GPESSGKT.

Belongs to the RecA family.

The protein localises to the cytoplasm. Can catalyze the hydrolysis of ATP in the presence of single-stranded DNA, the ATP-dependent uptake of single-stranded DNA by duplex DNA, and the ATP-dependent hybridization of homologous single-stranded DNAs. It interacts with LexA causing its activation and leading to its autocatalytic cleavage. In Clostridioides difficile (strain 630) (Peptoclostridium difficile), this protein is Protein RecA.